A 1141-amino-acid polypeptide reads, in one-letter code: Isoleucine--tRNA ligase, cytoplasmic (1141 aa).

The 'HIGH' region signature appears at 50–60; the sequence is PFATGLPHYGH. The short motif at 601-605 is the 'KMSKS' region element; sequence KMSKS. Position 604 (Lys-604) interacts with ATP.

This sequence belongs to the class-I aminoacyl-tRNA synthetase family.

It localises to the cytoplasm. The enzyme catalyses tRNA(Ile) + L-isoleucine + ATP = L-isoleucyl-tRNA(Ile) + AMP + diphosphate. The chain is Isoleucine--tRNA ligase, cytoplasmic from Caenorhabditis elegans.